The sequence spans 372 residues: Tetraacyldisaccharide 4'-kinase (372 aa).

60–67 (TVGGSGKT) is an ATP binding site.

This sequence belongs to the LpxK family.

It carries out the reaction a lipid A disaccharide + ATP = a lipid IVA + ADP + H(+). Its pathway is glycolipid biosynthesis; lipid IV(A) biosynthesis; lipid IV(A) from (3R)-3-hydroxytetradecanoyl-[acyl-carrier-protein] and UDP-N-acetyl-alpha-D-glucosamine: step 6/6. Functionally, transfers the gamma-phosphate of ATP to the 4'-position of a tetraacyldisaccharide 1-phosphate intermediate (termed DS-1-P) to form tetraacyldisaccharide 1,4'-bis-phosphate (lipid IVA). This Psychrobacter cryohalolentis (strain ATCC BAA-1226 / DSM 17306 / VKM B-2378 / K5) protein is Tetraacyldisaccharide 4'-kinase.